A 775-amino-acid chain; its full sequence is Protein STRUBBELIG-RECEPTOR FAMILY 1 (775 aa).

Positions 1–31 are cleaved as a signal peptide; that stretch reads MRSMRSGRDNNICFLGFLSFALISLPSLSLA. The Extracellular portion of the chain corresponds to 32-314; the sequence is LTNPDDVAAI…GKEDSFTSKR (283 aa). 6 LRR repeats span residues 101 to 122, 123 to 146, 147 to 169, 171 to 193, 195 to 217, and 218 to 238; these read SLKAMDFSNNHIGGSIPSTLPV, SLQNLFLSGNNFTGTIPESLSSLK, SLSVMSLNNNLLSGKIPDVFQDL, LMINIDLSSNNLSGPLPPSMQNL, TLTSLLLQNNHLSGELDVLQDLP, and LKDLNVENNLFNGPIPEKLLS. Residue asparagine 133 is glycosylated (N-linked (GlcNAc...) asparagine). Asparagine 181 and asparagine 192 each carry an N-linked (GlcNAc...) asparagine glycan. Asparagine 250 is a glycosylation site (N-linked (GlcNAc...) asparagine). A disordered region spans residues 254 to 308; it reads APSPSPETPPSPTSPKRPFFGPPSPNASAGHGQAHVRSPPSDHHPSRPTPQGKED. Residues 256 to 278 are compositionally biased toward pro residues; sequence SPSPETPPSPTSPKRPFFGPPSP. Asparagine 279 carries N-linked (GlcNAc...) asparagine glycosylation. A helical membrane pass occupies residues 315–335; that stretch reads IIWISILGAFSFVVLALVCLL. Topologically, residues 336-775 are cytoplasmic; sequence CGRKCLRKRE…NGDNQYTGRR (440 aa). The segment at 345 to 414 is disordered; it reads EDSEQLSKPH…VGSESKQESH (70 aa). Positions 367-379 are enriched in polar residues; that stretch reads RSNASMLPPSNTF. Basic and acidic residues predominate over residues 380 to 391; that stretch reads NKDKEARPKERV. A Protein kinase domain is found at 478–756; it reads FSHENLIGTG…EVVQDLSDMI (279 aa).

Belongs to the protein kinase superfamily. Ser/Thr protein kinase family. As to expression, expressed in roots, stems, leaves and flowers. Low expression in seedlings and siliques.

The protein resides in the membrane. Its function is as follows. Not essential for epidermal patterning and not redundant with STRUBBELIG. In Arabidopsis thaliana (Mouse-ear cress), this protein is Protein STRUBBELIG-RECEPTOR FAMILY 1 (SRF1).